Reading from the N-terminus, the 568-residue chain is Urease subunit alpha (568 aa).

Residues 131-568 (GGMDAHIHFI…LPLAQRYFLY (438 aa)) enclose the Urease domain. The Ni(2+) site is built by H136, H138, and K219. The residue at position 219 (K219) is an N6-carboxylysine. A substrate-binding site is contributed by H221. 2 residues coordinate Ni(2+): H248 and H274. Residue H322 is the Proton donor of the active site. Position 362 (D362) interacts with Ni(2+).

Belongs to the metallo-dependent hydrolases superfamily. Urease alpha subunit family. In terms of assembly, heterotrimer of UreA (gamma), UreB (beta) and UreC (alpha) subunits. Three heterotrimers associate to form the active enzyme. The cofactor is Ni cation. In terms of processing, carboxylation allows a single lysine to coordinate two nickel ions.

The protein localises to the cytoplasm. The enzyme catalyses urea + 2 H2O + H(+) = hydrogencarbonate + 2 NH4(+). Its pathway is nitrogen metabolism; urea degradation; CO(2) and NH(3) from urea (urease route): step 1/1. The protein is Urease subunit alpha of Cereibacter sphaeroides (strain ATCC 17025 / ATH 2.4.3) (Rhodobacter sphaeroides).